The primary structure comprises 310 residues: uncharacterized protein (310 aa).

Belongs to the YiaX1 family.

This is an uncharacterized protein from Salmonella typhimurium (strain LT2 / SGSC1412 / ATCC 700720).